We begin with the raw amino-acid sequence, 212 residues long: Thylakoid membrane protein slr1949 (212 aa).

A helical transmembrane segment spans residues 109–131 (WVQDGLLLLLALGLCGISGYRLW). A coiled-coil region spans residues 180–212 (PNRRQRKQYETRLQALRQSAAKMKAKTQKAKAL).

It is found in the cellular thylakoid membrane. The chain is Thylakoid membrane protein slr1949 from Synechocystis sp. (strain ATCC 27184 / PCC 6803 / Kazusa).